The following is a 367-amino-acid chain: Protein RecA (367 aa).

An ATP-binding site is contributed by 73-80 (GPESSGKT). The segment at 345-367 (DEPVAKKASAKESKEAKELKEVE) is disordered.

Belongs to the RecA family.

The protein localises to the cytoplasm. Functionally, can catalyze the hydrolysis of ATP in the presence of single-stranded DNA, the ATP-dependent uptake of single-stranded DNA by duplex DNA, and the ATP-dependent hybridization of homologous single-stranded DNAs. It interacts with LexA causing its activation and leading to its autocatalytic cleavage. The chain is Protein RecA from Herminiimonas arsenicoxydans.